Here is an 83-residue protein sequence, read N- to C-terminus: Large ribosomal subunit protein bL27 (83 aa).

A disordered region spans residues 1–20 (MAHKKGASSSRNGRDSNPQY). Over residues 7–19 (ASSSRNGRDSNPQ) the composition is skewed to polar residues.

It belongs to the bacterial ribosomal protein bL27 family.

This chain is Large ribosomal subunit protein bL27, found in Bifidobacterium animalis subsp. lactis (strain AD011).